The chain runs to 205 residues: Cerebellin-3 (205 aa).

The first 32 residues, 1–32, serve as a signal peptide directing secretion; sequence MLGTKRHWPPGPSLSLELPLALTLLALRAGWA. The C1q domain occupies 67-205; it reads APPGRVAFAA…SFSGFLIFPL (139 aa). N-linked (GlcNAc...) asparagine glycosylation occurs at Asn90.

As to quaternary structure, heterohexamer; disulfide-linked heterotrimers. Interacts with CBLN1. May also form oligomers with CBLN2 and CBLN4.

The protein localises to the endoplasmic reticulum. It is found in the golgi apparatus. Its subcellular location is the cis-Golgi network. The protein resides in the secreted. It localises to the synapse. Its function is as follows. May be involved in synaptic functions in the CNS. This Bos taurus (Bovine) protein is Cerebellin-3 (CBLN3).